The chain runs to 469 residues: ATP-dependent protease ATPase subunit HslU (469 aa).

Residues isoleucine 24, 66-71 (GVGKTE), aspartate 282, glutamate 347, and arginine 419 contribute to the ATP site.

This sequence belongs to the ClpX chaperone family. HslU subfamily. In terms of assembly, a double ring-shaped homohexamer of HslV is capped on each side by a ring-shaped HslU homohexamer. The assembly of the HslU/HslV complex is dependent on binding of ATP.

The protein localises to the cytoplasm. ATPase subunit of a proteasome-like degradation complex; this subunit has chaperone activity. The binding of ATP and its subsequent hydrolysis by HslU are essential for unfolding of protein substrates subsequently hydrolyzed by HslV. HslU recognizes the N-terminal part of its protein substrates and unfolds these before they are guided to HslV for hydrolysis. This Listeria monocytogenes serotype 4a (strain HCC23) protein is ATP-dependent protease ATPase subunit HslU.